We begin with the raw amino-acid sequence, 152 residues long: MPSSDHWLQLQRNVRFGETDAAGVVHFYQLFRWCHEAWEESLARYGIAAAAIFPGCRDICQVPTVALPVVHCEADFQRPVHGGDDLRILLEPQRLNPGCFEVKYRFQLEDMDVARGLIRHLAIESESRRRCALPEPIDLWLEASTVGRLEPI.

The active site involves Asp-20.

It belongs to the 4-hydroxybenzoyl-CoA thioesterase family. DHNA-CoA hydrolase subfamily.

It carries out the reaction 1,4-dihydroxy-2-naphthoyl-CoA + H2O = 1,4-dihydroxy-2-naphthoate + CoA + H(+). Its pathway is cofactor biosynthesis; phylloquinone biosynthesis. The protein operates within quinol/quinone metabolism; 1,4-dihydroxy-2-naphthoate biosynthesis; 1,4-dihydroxy-2-naphthoate from chorismate: step 7/7. In terms of biological role, catalyzes the hydrolysis of 1,4-dihydroxy-2-naphthoyl-CoA (DHNA-CoA) to 1,4-dihydroxy-2-naphthoate (DHNA), a reaction involved in phylloquinone (vitamin K1) biosynthesis. The protein is 1,4-dihydroxy-2-naphthoyl-CoA hydrolase of Synechococcus sp. (strain CC9311).